The sequence spans 959 residues: Isoleucine--tRNA ligase (959 aa).

Positions 60-70 (PYANGSLHMGH) match the 'HIGH' region motif. Glu-569 contributes to the L-isoleucyl-5'-AMP binding site. A 'KMSKS' region motif is present at residues 610 to 614 (KMSKS). Lys-613 serves as a coordination point for ATP. The Zn(2+) site is built by Cys-928, Cys-931, Cys-948, and Cys-951.

The protein belongs to the class-I aminoacyl-tRNA synthetase family. IleS type 1 subfamily. As to quaternary structure, monomer. It depends on Zn(2+) as a cofactor.

The protein localises to the cytoplasm. It catalyses the reaction tRNA(Ile) + L-isoleucine + ATP = L-isoleucyl-tRNA(Ile) + AMP + diphosphate. In terms of biological role, catalyzes the attachment of isoleucine to tRNA(Ile). As IleRS can inadvertently accommodate and process structurally similar amino acids such as valine, to avoid such errors it has two additional distinct tRNA(Ile)-dependent editing activities. One activity is designated as 'pretransfer' editing and involves the hydrolysis of activated Val-AMP. The other activity is designated 'posttransfer' editing and involves deacylation of mischarged Val-tRNA(Ile). This is Isoleucine--tRNA ligase from Crocosphaera subtropica (strain ATCC 51142 / BH68) (Cyanothece sp. (strain ATCC 51142)).